The chain runs to 65 residues: uncharacterized protein (65 aa).

The tract at residues 1-22 is disordered; it reads MEKETPQQETKQSTNKESGFFD. The span at 7 to 17 shows a compositional bias: polar residues; the sequence is QQETKQSTNKE. Residues 22 to 65 adopt a coiled-coil conformation; sequence DEIIKRTNQLLEKEKELHEKYNKEITSQQDQIDQLKKKINQLKY.

This is an uncharacterized protein from Dictyostelium discoideum (Social amoeba).